Here is a 419-residue protein sequence, read N- to C-terminus: Altered inheritance of mitochondria protein 6 (419 aa).

An N-terminal signal peptide occupies residues methionine 1–serine 31.

This sequence belongs to the AIM6 family.

In Kluyveromyces lactis (strain ATCC 8585 / CBS 2359 / DSM 70799 / NBRC 1267 / NRRL Y-1140 / WM37) (Yeast), this protein is Altered inheritance of mitochondria protein 6 (AIM6).